We begin with the raw amino-acid sequence, 190 residues long: MDNQFIFKYSWETLPKKWVKKMERSEHGNRFDTNTDYLFQLLCFLKLHTYTRVQVLIDICGVDYPSRKRRFEVVYNLLSTRYNSRIRVQTSADEVTRISSVVSLFPSAGWWEREVWDMFGVSFINHPDLRRILTDYGFEGHPLRKDFPLSGYVEVRYDDPEKRVVSEPIEMTQEFRYFDFASPWEQRSDG.

It belongs to the complex I 30 kDa subunit family. In terms of assembly, complex I is composed of at least 49 different subunits. This is a component of the iron-sulfur (IP) fragment of the enzyme.

The protein localises to the mitochondrion inner membrane. It catalyses the reaction a ubiquinone + NADH + 5 H(+)(in) = a ubiquinol + NAD(+) + 4 H(+)(out). Its function is as follows. Core subunit of the mitochondrial membrane respiratory chain NADH dehydrogenase (Complex I) that is believed to belong to the minimal assembly required for catalysis. Complex I functions in the transfer of electrons from NADH to the respiratory chain. The immediate electron acceptor for the enzyme is believed to be ubiquinone. The protein is NADH dehydrogenase [ubiquinone] iron-sulfur protein 3 (NAD9) of Arabidopsis thaliana (Mouse-ear cress).